The chain runs to 272 residues: Bis(5'-nucleosyl)-tetraphosphatase, symmetrical (272 aa).

The protein belongs to the Ap4A hydrolase family.

It carries out the reaction P(1),P(4)-bis(5'-adenosyl) tetraphosphate + H2O = 2 ADP + 2 H(+). Hydrolyzes diadenosine 5',5'''-P1,P4-tetraphosphate to yield ADP. The protein is Bis(5'-nucleosyl)-tetraphosphatase, symmetrical of Ectopseudomonas mendocina (strain ymp) (Pseudomonas mendocina).